Reading from the N-terminus, the 123-residue chain is Protein Rev (123 aa).

At Ser5 the chain carries Phosphoserine; by host CK2. The tract at residues 18–26 (IIKTLYQSN) is homomultimerization. Disordered regions lie at residues 24-50 (QSNP…ARQR) and 79-123 (EGLS…GTKE). Residues 34–50 (TRQARKNRRRRWRARQR) carry the Nuclear localization signal and RNA-binding (RRE) motif. The span at 36–50 (QARKNRRRRWRARQR) shows a compositional bias: basic residues. The Nuclear export signal and binding to XPO1 motif lies at 73 to 84 (FQLPPLEGLSLD). A Phosphoserine; by host modification is found at Ser92. Over residues 93 to 105 (GTQQPQGTETGVG) the composition is skewed to low complexity.

This sequence belongs to the HIV-1 REV protein family. In terms of assembly, homomultimer; when bound to the RRE. Multimeric assembly is essential for activity and may involve XPO1. Binds to human KPNB1, XPO1, TNPO1, RANBP5 and IPO7. Interacts with the viral Integrase. Interacts with human KHDRBS1. Interacts with human NAP1; this interaction decreases Rev multimerization and stimulates its activity. Interacts with human DEAD-box helicases DDX3 and DDX24; these interactions may serve for viral RNA export to the cytoplasm and packaging, respectively. Interacts with human PSIP1; this interaction may inhibit HIV-1 DNA integration by promoting dissociation of the Integrase-LEDGF/p75 complex. In terms of processing, asymmetrically arginine dimethylated at one site by host PRMT6. Methylation impairs the RNA-binding activity and export of viral RNA from the nucleus to the cytoplasm. Post-translationally, phosphorylated by protein kinase CK2. Presence of, and maybe binding to the N-terminus of the regulatory beta subunit of CK2 is necessary for CK2-mediated Rev's phosphorylation.

The protein localises to the host nucleus. It is found in the host nucleolus. Its subcellular location is the host cytoplasm. Its function is as follows. Escorts unspliced or incompletely spliced viral pre-mRNAs (late transcripts) out of the nucleus of infected cells. These pre-mRNAs carry a recognition sequence called Rev responsive element (RRE) located in the env gene, that is not present in fully spliced viral mRNAs (early transcripts). This function is essential since most viral proteins are translated from unspliced or partially spliced pre-mRNAs which cannot exit the nucleus by the pathway used by fully processed cellular mRNAs. Rev itself is translated from a fully spliced mRNA that readily exits the nucleus. Rev's nuclear localization signal (NLS) binds directly to KPNB1/Importin beta-1 without previous binding to KPNA1/Importin alpha-1. KPNB1 binds to the GDP bound form of RAN (Ran-GDP) and targets Rev to the nucleus. In the nucleus, the conversion from Ran-GDP to Ran-GTP dissociates Rev from KPNB1 and allows Rev's binding to the RRE in viral pre-mRNAs. Rev multimerization on the RRE via cooperative assembly exposes its nuclear export signal (NES) to the surface. Rev can then form a complex with XPO1/CRM1 and Ran-GTP, leading to nuclear export of the complex. Conversion from Ran-GTP to Ran-GDP mediates dissociation of the Rev/RRE/XPO1/RAN complex, so that Rev can return to the nucleus for a subsequent round of export. Beside KPNB1, also seems to interact with TNPO1/Transportin-1, RANBP5/IPO5 and IPO7/RANBP7 for nuclear import. The nucleoporin-like HRB/RIP is an essential cofactor that probably indirectly interacts with Rev to release HIV RNAs from the perinuclear region to the cytoplasm. This chain is Protein Rev, found in Human immunodeficiency virus type 1 group M subtype G (isolate 92NG083) (HIV-1).